Here is a 132-residue protein sequence, read N- to C-terminus: Fatty acid-binding protein, adipocyte (132 aa).

The residue at position 2 (Cys2) is an N-acetylcysteine. A Phosphoserine modification is found at Ser13. A Phosphotyrosine; by Tyr-kinases modification is found at Tyr20. Positions 22–32 match the Nuclear localization signal motif; sequence KEVGVGFATRK. 127–129 is an a fatty acid binding site; that stretch reads RVY.

The protein belongs to the calycin superfamily. Fatty-acid binding protein (FABP) family. As to quaternary structure, monomer. Homodimer. Interacts with PPARG.

It is found in the cytoplasm. The protein resides in the nucleus. Functionally, lipid transport protein in adipocytes. Binds both long chain fatty acids and retinoic acid. Delivers long-chain fatty acids and retinoic acid to their cognate receptors in the nucleus. The protein is Fatty acid-binding protein, adipocyte (Fabp4) of Mus musculus (Mouse).